The primary structure comprises 307 residues: Fructokinase (307 aa).

It belongs to the carbohydrate kinase PfkB family.

It catalyses the reaction D-fructose + ATP = D-fructose 6-phosphate + ADP + H(+). This chain is Fructokinase (cscK), found in Escherichia coli.